Consider the following 279-residue polypeptide: Release factor glutamine methyltransferase (279 aa).

S-adenosyl-L-methionine-binding residues include Asp-139 and Asn-182. Residue Asn-182 to Tyr-185 coordinates substrate.

This sequence belongs to the protein N5-glutamine methyltransferase family. PrmC subfamily.

It carries out the reaction L-glutaminyl-[peptide chain release factor] + S-adenosyl-L-methionine = N(5)-methyl-L-glutaminyl-[peptide chain release factor] + S-adenosyl-L-homocysteine + H(+). Functionally, methylates the class 1 translation termination release factors RF1/PrfA and RF2/PrfB on the glutamine residue of the universally conserved GGQ motif. The chain is Release factor glutamine methyltransferase from Thermodesulfovibrio yellowstonii (strain ATCC 51303 / DSM 11347 / YP87).